The sequence spans 302 residues: NAD kinase (302 aa).

The active-site Proton acceptor is the Asp-79. NAD(+)-binding positions include 79-80, 153-154, Arg-181, Asp-183, 194-199, Ala-218, and Gln-252; these read DG, ND, and TAYALS.

It belongs to the NAD kinase family. A divalent metal cation serves as cofactor.

It localises to the cytoplasm. The enzyme catalyses NAD(+) + ATP = ADP + NADP(+) + H(+). Functionally, involved in the regulation of the intracellular balance of NAD and NADP, and is a key enzyme in the biosynthesis of NADP. Catalyzes specifically the phosphorylation on 2'-hydroxyl of the adenosine moiety of NAD to yield NADP. The polypeptide is NAD kinase (Ralstonia nicotianae (strain ATCC BAA-1114 / GMI1000) (Ralstonia solanacearum)).